The sequence spans 357 residues: UPF0283 membrane protein BOV_0999 (357 aa).

Positions 1-36 (MSDKTPRKPTAFRLEQPARVSAASEQEEPRRPRAVK) are disordered. A compositionally biased stretch (basic and acidic residues) spans 27–36 (EEPRRPRAVK). Helical transmembrane passes span 78–98 (ILFGALGILVSFAIGIWTEDL) and 109–129 (LGWTALGVAMVALAAFAAIIL).

This sequence belongs to the UPF0283 family.

The protein resides in the cell inner membrane. In Brucella ovis (strain ATCC 25840 / 63/290 / NCTC 10512), this protein is UPF0283 membrane protein BOV_0999.